The primary structure comprises 323 residues: Sphingomyelinase D (323 aa).

The first 20 residues, 1–20 (MISLLRLCSFLAAGSILVQG), serve as a signal peptide directing secretion. H59 is a catalytic residue. The Mg(2+) site is built by E79, D81, and D127. The short motif at 308–315 (ATNDDNPW) is the SMD-tail element.

It belongs to the sphingomyelinase D/phospholipase D family. The cofactor is Mg(2+).

It localises to the secreted. It catalyses the reaction a sphingomyelin + H2O = an N-acylsphing-4-enine 1-phosphate + choline + H(+). Catalyzes the hydrolysis of sphingomyelin. Sphingomyelinases D are produced by some spider in their venoms, but also by arthropods such as ticks, or pathogenic bacteria and fungi. They might play a role in pathogenicity through different mechanisms, such as membrane destabilization and host cell penetration, but also pulmonary inflammation and cutaneous lesions. This is Sphingomyelinase D from Trichophyton rubrum (strain ATCC MYA-4607 / CBS 118892) (Athlete's foot fungus).